The primary structure comprises 359 residues: Leafy/floricaula homolog FL1 (359 aa).

The tract at residues 113 to 170 (SEEQVVQHSEKDQLGRAGSGDTAGTSWGAQQQRKKHRHRHHITAMKGAATEEDEEDEE) is disordered. Positions 144–155 (QRKKHRHRHHIT) are enriched in basic residues. DNA-binding regions lie at residues 179–183 (REHPF), 248–255 (NKPKMRHY), and 320–323 (YVPT). The span at 340–352 (ASSASTSTSAPTA) shows a compositional bias: low complexity. The disordered stretch occupies residues 340–359 (ASSASTSTSAPTAHHLELPY).

It belongs to the FLO/LFY family. Expressed strongly in the early floral primordium and then successively in the primordia of sepals, petals, stamens and carpels. Also in the leaf primordia and young leaves.

The protein resides in the nucleus. Probable transcription factor. This Eucalyptus globulus (Tasmanian blue gum) protein is Leafy/floricaula homolog FL1 (LF1).